The chain runs to 595 residues: Arginine--tRNA ligase (595 aa).

The 'HIGH' region motif lies at 132 to 142 (ANPTGPLHVGH).

It belongs to the class-I aminoacyl-tRNA synthetase family. In terms of assembly, monomer.

The protein resides in the cytoplasm. The enzyme catalyses tRNA(Arg) + L-arginine + ATP = L-arginyl-tRNA(Arg) + AMP + diphosphate. The protein is Arginine--tRNA ligase of Cupriavidus pinatubonensis (strain JMP 134 / LMG 1197) (Cupriavidus necator (strain JMP 134)).